The chain runs to 254 residues: Imidazole glycerol phosphate synthase subunit HisF (254 aa).

Active-site residues include D11 and D130.

The protein belongs to the HisA/HisF family. In terms of assembly, heterodimer of HisH and HisF.

The protein resides in the cytoplasm. It catalyses the reaction 5-[(5-phospho-1-deoxy-D-ribulos-1-ylimino)methylamino]-1-(5-phospho-beta-D-ribosyl)imidazole-4-carboxamide + L-glutamine = D-erythro-1-(imidazol-4-yl)glycerol 3-phosphate + 5-amino-1-(5-phospho-beta-D-ribosyl)imidazole-4-carboxamide + L-glutamate + H(+). It participates in amino-acid biosynthesis; L-histidine biosynthesis; L-histidine from 5-phospho-alpha-D-ribose 1-diphosphate: step 5/9. In terms of biological role, IGPS catalyzes the conversion of PRFAR and glutamine to IGP, AICAR and glutamate. The HisF subunit catalyzes the cyclization activity that produces IGP and AICAR from PRFAR using the ammonia provided by the HisH subunit. This chain is Imidazole glycerol phosphate synthase subunit HisF, found in Microcystis aeruginosa (strain NIES-843 / IAM M-2473).